The primary structure comprises 556 residues: 2-succinyl-5-enolpyruvyl-6-hydroxy-3-cyclohexene-1-carboxylate synthase (556 aa).

The protein belongs to the TPP enzyme family. MenD subfamily. In terms of assembly, homodimer. Mg(2+) serves as cofactor. Mn(2+) is required as a cofactor. Requires thiamine diphosphate as cofactor.

The enzyme catalyses isochorismate + 2-oxoglutarate + H(+) = 5-enolpyruvoyl-6-hydroxy-2-succinyl-cyclohex-3-ene-1-carboxylate + CO2. Its pathway is quinol/quinone metabolism; 1,4-dihydroxy-2-naphthoate biosynthesis; 1,4-dihydroxy-2-naphthoate from chorismate: step 2/7. It functions in the pathway quinol/quinone metabolism; menaquinone biosynthesis. Catalyzes the thiamine diphosphate-dependent decarboxylation of 2-oxoglutarate and the subsequent addition of the resulting succinic semialdehyde-thiamine pyrophosphate anion to isochorismate to yield 2-succinyl-5-enolpyruvyl-6-hydroxy-3-cyclohexene-1-carboxylate (SEPHCHC). This is 2-succinyl-5-enolpyruvyl-6-hydroxy-3-cyclohexene-1-carboxylate synthase from Staphylococcus epidermidis (strain ATCC 12228 / FDA PCI 1200).